We begin with the raw amino-acid sequence, 535 residues long: Large neutral amino acids transporter small subunit 2 (535 aa).

A compositionally biased stretch (basic and acidic residues) spans 1–17 (MEEGARHRNNTEKKHPG). Residues 1 to 30 (MEEGARHRNNTEKKHPGGGESDASPEAGSG) are disordered. Residues 1–44 (MEEGARHRNNTEKKHPGGGESDASPEAGSGGGGVALKKEIGLVS) are Cytoplasmic-facing. Position 29 is a phosphoserine (serine 29). A helical membrane pass occupies residues 45 to 65 (ACGIIVGNIIGSGIFVSPKGV). Residue isoleucine 53 coordinates L-leucine. Residues 66 to 73 (LENAGSVG) are Extracellular-facing. A helical transmembrane segment spans residues 74–95 (LALIVWIVTGFITVVGALCYAE). Topologically, residues 96–116 (LGVTIPKSGGDYSYVKDIFGG) are cytoplasmic. A helical transmembrane segment spans residues 117–149 (LAGFLRLWIAVLVIYPTNQAVIALTFSNYVLQP). Asparagine 134 contributes to the L-tryptophan binding site. Topologically, residues 150–157 (LFPTCFPP) are extracellular. A helical transmembrane segment spans residues 158 to 178 (ESGLRLLAAICLLLLTWVNCS). Over 179–181 (SVR) the chain is Cytoplasmic. The helical transmembrane segment at 182–210 (WATRVQDIFTAGKLLALALIIIMGIVQIC) threads the bilayer. Residues 211–230 (KGEYFWLEPKNAFENFQEPD) are Extracellular-facing. A helical membrane pass occupies residues 231–252 (IGLVALAFLQGSFAYGGWNFLN). Glycine 246 serves as a coordination point for L-leucine. Residues 253–265 (YVTEELVDPYKNL) are Cytoplasmic-facing. The helical transmembrane segment at 266 to 287 (PRAIFISIPLVTFVYVFANVAY) threads the bilayer. Topologically, residues 288–312 (VTAMSPQELLASNAVAVTFGEKLLG) are extracellular. Residues 313–338 (VMAWIMPISVALSTFGGVNGSLFTSS) form a helical membrane-spanning segment. Residues 339–364 (RLFFAGAREGHLPSVLAMIHVKRCTP) are Cytoplasmic-facing. A helical membrane pass occupies residues 365-382 (IPALLFTCISTLLMLVTS). At 383-386 (DMYT) the chain is on the extracellular side. The helical transmembrane segment at 387–408 (LINYVGFINYLFYGVTVAGQIV) threads the bilayer. Residue asparagine 395 participates in L-tryptophan binding. The Cytoplasmic portion of the chain corresponds to 409-423 (LRWKKPDIPRPIKIN). 2 consecutive transmembrane segments (helical) span residues 424-446 (LLFPIIYLLFWAFLLVFSLWSEP) and 447-466 (VVCGIGLAIMLTGVPVYFLG). Residues 467–535 (VYWQHKPKCF…DKDVAGQPQP (69 aa)) lie on the Cytoplasmic side of the membrane. The disordered stretch occupies residues 502-535 (SGTEEANEDMEEQQQPMYQPTPTKDKDVAGQPQP). Residues 514-523 (QQQPMYQPTP) are compositionally biased toward polar residues.

This sequence belongs to the amino acid-polyamine-organocation (APC) superfamily. L-type amino acid transporter (LAT) (TC 2.A.3.8) family. Disulfide-linked heterodimer composed of the catalytic light chain subunit SLC7A8 and the heavy chain subunit SLC3A2. SLC3A2 acts as chaperones for correct plasma membrane trafficking and stabilization of SLC7A8 and modulates the substrate affinity and specificity of SLC7A8. ICAM-1 associates with the heterodimer SLC3A2/SLC7A8; this interaction regulates SLC7A8 activity. In terms of tissue distribution, strongest expression is observed in kidney and moderate expression in placenta and brain, followed by liver, prostate, testis, ovary, lymph node, thymus, spleen, skeletal muscle and heart. Also expressed in fetal liver as well as in the retinal pigment epithelial cell line ARPE-19 and the intestinal epithelial cell line Caco-2.

The protein resides in the cell membrane. Its subcellular location is the basolateral cell membrane. It carries out the reaction L-histidine(in) + L-phenylalanine(out) = L-histidine(out) + L-phenylalanine(in). The catalysed reaction is L-tryptophan(in) + L-phenylalanine(out) = L-tryptophan(out) + L-phenylalanine(in). The enzyme catalyses L-isoleucine(in) + L-phenylalanine(out) = L-isoleucine(out) + L-phenylalanine(in). It catalyses the reaction L-valine(in) + L-phenylalanine(out) = L-valine(out) + L-phenylalanine(in). It carries out the reaction L-leucine(in) + L-phenylalanine(out) = L-leucine(out) + L-phenylalanine(in). The catalysed reaction is L-glutamine(in) + L-phenylalanine(out) = L-glutamine(out) + L-phenylalanine(in). The enzyme catalyses L-cysteine(in) + L-phenylalanine(out) = L-cysteine(out) + L-phenylalanine(in). It catalyses the reaction L-phenylalanine(out) + L-methionine(in) = L-phenylalanine(in) + L-methionine(out). It carries out the reaction L-leucine(out) + L-methionine(in) = L-leucine(in) + L-methionine(out). The catalysed reaction is L-cysteine(out) + L-methionine(in) = L-cysteine(in) + L-methionine(out). The enzyme catalyses S-methylmercury-L-cysteine(out) + L-methionine(in) = S-methylmercury-L-cysteine(in) + L-methionine(out). It catalyses the reaction S-methylmercury-L-cysteine(in) + L-leucine(out) = S-methylmercury-L-cysteine(out) + L-leucine(in). It carries out the reaction S-methylmercury-L-cysteine(in) + L-phenylalanine(out) = S-methylmercury-L-cysteine(out) + L-phenylalanine(in). The catalysed reaction is L-phenylalanine(out) + L-serine(in) = L-phenylalanine(in) + L-serine(out). The enzyme catalyses L-phenylalanine(out) + glycine(in) = L-phenylalanine(in) + glycine(out). It catalyses the reaction L-phenylalanine(out) + L-alanine(in) = L-phenylalanine(in) + L-alanine(out). It carries out the reaction 3,3'-diiodo-L-thyronine(out) = 3,3'-diiodo-L-thyronine(in). The catalysed reaction is 3,3',5-triiodo-L-thyronine(out) = 3,3',5-triiodo-L-thyronine(in). The enzyme catalyses L-dopa(out) + L-phenylalanine(in) = L-dopa(in) + L-phenylalanine(out). With respect to regulation, inhibited by the L-type inhibitor 2-Aminobicyclo-(2,2,1)-heptane-2-carboxylic acid (BCH). In terms of biological role, associates with SLC3A2 to form a functional heterodimeric complex that translocates small and large neutral amino acids with broad specificity and a stoichiometry of 1:1. Functions as amino acid antiporter mediating the influx of extracellular essential amino acids mainly in exchange with the efflux of highly concentrated intracellular amino acids. Has relatively symmetrical selectivities but strongly asymmetrical substrate affinities at both the intracellular and extracellular sides of the transporter. This asymmetry allows SLC7A8 to regulate intracellular amino acid pools (mM concentrations) by exchange with external amino acids (uM concentration range), equilibrating the relative concentrations of different amino acids across the plasma membrane instead of mediating their net uptake. May play an essential role in the reabsorption of neutral amino acids from the epithelial cells to the bloodstream in the kidney. Involved in the uptake of methylmercury (MeHg) when administered as the L-cysteine or D,L-homocysteine complexes, and hence plays a role in metal ion homeostasis and toxicity. Involved in the cellular activity of small molecular weight nitrosothiols, via the stereoselective transport of L-nitrosocysteine (L-CNSO) across the transmembrane. Imports the thyroid hormone diiodothyronine (T2) and to a smaller extent triiodothyronine (T3) but not rT 3 or thyroxine (T4). Mediates the uptake of L-DOPA. May participate in auditory function. This Homo sapiens (Human) protein is Large neutral amino acids transporter small subunit 2.